Here is a 4250-residue protein sequence, read N- to C-terminus: Dynein axonemal heavy chain 1 (4250 aa).

The segment at 1–73 (MEECNKEGPS…KSPLTGTDKK (73 aa)) is disordered. Residues 1–1527 (MEECNKEGPS…YIRAVNAEFI (1527 aa)) are stem. Residues 24 to 42 (PESHDLEKILQESNYHPER) are compositionally biased toward basic and acidic residues. A compositionally biased stretch (pro residues) spans 46–55 (NPDPKTPPLP). 4 AAA regions span residues 1528–1749 (YGYE…VISA), 1809–2042 (QAIR…NTVK), 2174–2434 (TMMP…VFQG), and 2532–2784 (DYNQ…LARH). A GPAGTGKT motif motif is present at residues 1566-1573 (GPAGTGKT). 1566-1573 (GPAGTGKT) contributes to the ATP binding site. Positions 1616–1622 (CFDEFNR) match the CFDEFNR motif motif. ATP-binding positions include 1847–1854 (GPTGSGKS), 2212–2219 (GPTGTGKT), and 2571–2578 (GVGGSGRS). A stalk region spans residues 2799–3097 (FSILIGQKKM…EELEMKCEQC (299 aa)). The stretch at 3045 to 3128 (LREAQDDLEV…QETVENLENM (84 aa)) forms a coiled coil. AAA stretches follow at residues 3182–3412 (LGNP…EIQA) and 3625–3844 (MQDF…QLKM).

The protein belongs to the dynein heavy chain family. Consists of at least two heavy chains and a number of intermediate and light chains.

The protein localises to the cytoplasm. Its subcellular location is the cytoskeleton. The protein resides in the cilium axoneme. It localises to the cell projection. It is found in the cilium. The protein localises to the flagellum. In terms of biological role, force generating protein of cilia required for sperm flagellum motility. Produces force towards the minus ends of microtubules. Dynein has ATPase activity; the force-producing power stroke is thought to occur on release of ADP. Required in spermatozoa for the formation of the inner dynein arms and biogenesis of the axoneme. In Mus musculus (Mouse), this protein is Dynein axonemal heavy chain 1.